The following is a 176-amino-acid chain: Ferritin, higher subunit (176 aa).

In terms of domain architecture, Ferritin-like diiron spans 7 to 156 (QNFHRDCEAA…DYITNLKRLG (150 aa)). The Fe cation site is built by E24, E58, E59, H62, E104, and Q138.

This sequence belongs to the ferritin family. As to quaternary structure, oligomer of 24 subunits. The functional molecule is roughly spherical and contains a central cavity into which the polymeric mineral iron core is deposited.

It catalyses the reaction 4 Fe(2+) + O2 + 4 H(+) = 4 Fe(3+) + 2 H2O. Functionally, stores iron in a soluble, non-toxic, readily available form. Important for iron homeostasis. Has ferroxidase activity. Iron is taken up in the ferrous form and deposited as ferric hydroxides after oxidation. This Aquarana catesbeiana (American bullfrog) protein is Ferritin, higher subunit.